The chain runs to 97 residues: Nucleoid-associated protein Hac_0048 (97 aa).

The protein belongs to the YbaB/EbfC family. As to quaternary structure, homodimer.

It is found in the cytoplasm. It localises to the nucleoid. In terms of biological role, binds to DNA and alters its conformation. May be involved in regulation of gene expression, nucleoid organization and DNA protection. The polypeptide is Nucleoid-associated protein Hac_0048 (Helicobacter acinonychis (strain Sheeba)).